Reading from the N-terminus, the 116-residue chain is Beta-2-microglobulin (116 aa).

The first 19 residues, 1 to 19, serve as a signal peptide directing secretion; that stretch reads MRAIITFALFCVLYVTVQG. The Ig-like C1-type domain occupies 24-110; the sequence is PKVQVYSHFP…VRHMNNKNIY (87 aa). The cysteines at positions 44 and 99 are disulfide-linked.

It belongs to the beta-2-microglobulin family. As to quaternary structure, heterodimer of an alpha chain and a beta chain. Beta-2-microglobulin is the beta-chain of major histocompatibility complex class I molecules.

The protein resides in the secreted. Component of the class I major histocompatibility complex (MHC). Involved in the presentation of peptide antigens to the immune system. This chain is Beta-2-microglobulin (b2m), found in Cyprinus carpio (Common carp).